The sequence spans 756 residues: Transient receptor potential cation channel subfamily V member 2 (756 aa).

The tract at residues 1-45 (MTSASNPPAFRLETSDGDEEGSAEVNKGKNEPPPMESPFQGEDRN) is disordered. Positions 1-385 (MTSASNPPAF…LLQEKWDRLI (385 aa)) are required for interaction with SLC50A1. Residues 1–387 (MTSASNPPAF…QEKWDRLIPR (387 aa)) lie on the Cytoplasmic side of the membrane. Residues Ser15 and Ser77 each carry the phosphoserine modification. ANK repeat units follow at residues 68–110 (NRFD…TEGS), 111–157 (TGKT…DEFY), 158–203 (RGHS…TCFY), 204–239 (FGELPLSLAACTKQWDVVTYLLENPHQPASLEATDS), 240–288 (LGNT…ICNH), and 289–315 (QGLTPLKLAAKEGKIEIFRHILQREFS). The chain crosses the membrane as a helical span at residues 388 to 408 (FFFNFACYLVYMIIFTIVAYH). The Extracellular portion of the chain corresponds to 409 to 428 (QPSLEQPAIPSSKATFGDSM). A helical membrane pass occupies residues 429–449 (LLLGHILILLGGIYLLLGQLW). At 450 to 455 (YFWRRR) the chain is on the cytoplasmic side. A helical membrane pass occupies residues 456-476 (LFIWISFMDSYFEILFLVQAL). The Extracellular portion of the chain corresponds to 477 to 490 (LTVLSQVLRFVETE). Residues 491–511 (WYLPLLVSSLVLGWLNLLYYT) form a helical membrane-spanning segment. The Cytoplasmic portion of the chain corresponds to 512–532 (RGFQHTGIYSVMIQKVILRDL). The helical transmembrane segment at 533 to 553 (LRFLLVYLVFLFGFAVALVSL) threads the bilayer. A disordered region spans residues 559 to 583 (SPKAPEDSNTTVTEKPTLGQEEEPV). Asn567 carries an N-linked (GlcNAc...) asparagine glycan. An intramembrane region (pore-forming) is located at residues 568–604 (TTVTEKPTLGQEEEPVPYGGILDASLELFKFTIGMGE). The helical transmembrane segment at 617–637 (VLLLLLAYVLLTYVLLLNMLI) threads the bilayer. Residues 638–756 (ALMSETVNSV…HLPLQVLQSH (119 aa)) lie on the Cytoplasmic side of the membrane. The segment at 719-756 (EDPSGAGITGYKKNPTSKPGKNSASEEDHLPLQVLQSH) is disordered. Over residues 732-741 (NPTSKPGKNS) the composition is skewed to polar residues. Phosphoserine occurs at positions 743 and 755.

The protein belongs to the transient receptor (TC 1.A.4) family. TrpV subfamily. TRPV2 sub-subfamily. In terms of assembly, homotetramer. Interacts with a cAMP-dependent protein kinase type II regulatory subunit (PRKAR2A or PRKAR2B) and ACBD3. Interacts with SLC50A1; the interaction probably occurs intracellularly and depends on TRPV2 N-glycosylation. N-glycosylated. Post-translationally, phosphorylated by PKA. In terms of tissue distribution, abundantly expressed in spleen, placenta, skeleton muscle, lung and brain.

It is found in the cell membrane. It localises to the cytoplasm. The protein resides in the melanosome. It carries out the reaction Ca(2+)(in) = Ca(2+)(out). The catalysed reaction is Mg(2+)(in) = Mg(2+)(out). It catalyses the reaction Na(+)(in) = Na(+)(out). The enzyme catalyses K(+)(in) = K(+)(out). Calcium-permeable, non-selective cation channel with an outward rectification. Seems to be regulated, at least in part, by IGF1, PDGF and neuropeptide head activator. May transduce physical stimuli in mast cells. Activated by temperatures higher than 52 degrees Celsius; is not activated by vanilloids and acidic pH. The polypeptide is Transient receptor potential cation channel subfamily V member 2 (Trpv2) (Mus musculus (Mouse)).